A 136-amino-acid chain; its full sequence is Small ribosomal subunit protein uS19 (136 aa).

The tract at residues 114–136 (RSRVSHGSAGVGATRSSKFVPLK) is disordered.

This sequence belongs to the universal ribosomal protein uS19 family.

Its function is as follows. Protein S19 forms a complex with S13 that binds strongly to the 16S ribosomal RNA. This is Small ribosomal subunit protein uS19 from Methanosarcina acetivorans (strain ATCC 35395 / DSM 2834 / JCM 12185 / C2A).